Consider the following 540-residue polypeptide: SNW/SKI-interacting protein B (540 aa).

Disordered regions lie at residues 1 to 106 (MVLR…SLTV), 215 to 273 (GETQ…NPKG), 351 to 402 (GAAP…RDRD), and 502 to 526 (ASVAAGKRERPVEFDGPEMEEDPFH). 2 stretches are compositionally biased toward basic and acidic residues: residues 16-29 (PHDHTEDEWFKERY) and 83-94 (MGRRGGDGDGEQ). The tract at residues 189–353 (PEFIKYTPAR…KARAEMLGAA (165 aa)) is SNW. The span at 236-251 (AGSPPVPVLRSPPRPP) shows a compositional bias: pro residues. The segment covering 359 to 382 (ERSKAAAERDAIREERRRERRLEA) has biased composition (basic and acidic residues). Low complexity predominate over residues 383 to 393 (RAAAAAASKKS).

Belongs to the SNW family.

The protein resides in the nucleus. The protein is SNW/SKI-interacting protein B of Oryza sativa subsp. japonica (Rice).